The sequence spans 156 residues: Protein LlR18B (156 aa).

Trans-zeatin contacts are provided by D8 and D28. Residues P32 and I38 each coordinate Ca(2+). Trans-zeatin-binding residues include K54, E133, and K136.

The protein belongs to the BetVI family. As to expression, ubiquitous, with higher levels in roots.

The protein resides in the cytoplasm. Its subcellular location is the cytosol. Class II ribonuclease (RNase), with low activity on single-strand RNA. Binds to cytokinins. Interacts with melatonin. The protein is Protein LlR18B (LLR18B) of Lupinus luteus (European yellow lupine).